The sequence spans 138 residues: Putative pre-16S rRNA nuclease (138 aa).

This sequence belongs to the YqgF nuclease family.

Its subcellular location is the cytoplasm. In terms of biological role, could be a nuclease involved in processing of the 5'-end of pre-16S rRNA. The protein is Putative pre-16S rRNA nuclease of Citrobacter koseri (strain ATCC BAA-895 / CDC 4225-83 / SGSC4696).